A 167-amino-acid chain; its full sequence is Ureidoglycolate lyase (167 aa).

Belongs to the ureidoglycolate lyase family. Homodimer. Ni(2+) serves as cofactor.

It carries out the reaction (S)-ureidoglycolate = urea + glyoxylate. It functions in the pathway nitrogen metabolism; (S)-allantoin degradation. Catalyzes the catabolism of the allantoin degradation intermediate (S)-ureidoglycolate, generating urea and glyoxylate. Involved in the utilization of allantoin as nitrogen source. The sequence is that of Ureidoglycolate lyase from Pseudomonas entomophila (strain L48).